The sequence spans 510 residues: Acyl-CoA desaturase 1 (510 aa).

The Cytoplasmic portion of the chain corresponds to Met1 to Asn112. Residues Trp113–Gly133 traverse the membrane as a helical segment. Topologically, residues Lys134 to His138 are lumenal. Residues Leu139–Gly159 traverse the membrane as a helical segment. Residues Tyr160–His255 are Cytoplasmic-facing. 5 residues coordinate Fe cation: His161, His166, His198, His201, and His202. The short motif at His161–His166 is the Histidine box-1 element. The short motif at His198–His202 is the Histidine box-2 element. Residues Tyr256–Phe276 traverse the membrane as a helical segment. At Asn277 to Met280 the chain is on the lumenal side. Residues Gly281 to Ile301 traverse the membrane as a helical segment. The Cytoplasmic portion of the chain corresponds to Asn302–Phe510. The Fe cation site is built by His306, His335, His338, and His339. The Histidine box-3 motif lies at His335 to His339. Positions Leu409 to Lys487 constitute a Cytochrome b5 heme-binding domain. His444 and His470 together coordinate heme.

The protein belongs to the fatty acid desaturase type 1 family. Requires Fe(2+) as cofactor.

It localises to the endoplasmic reticulum membrane. The catalysed reaction is octadecanoyl-CoA + 2 Fe(II)-[cytochrome b5] + O2 + 2 H(+) = (9Z)-octadecenoyl-CoA + 2 Fe(III)-[cytochrome b5] + 2 H2O. It catalyses the reaction hexadecanoyl-CoA + 2 Fe(II)-[cytochrome b5] + O2 + 2 H(+) = (9Z)-hexadecenoyl-CoA + 2 Fe(III)-[cytochrome b5] + 2 H2O. Functionally, stearoyl-CoA desaturase that utilizes O(2) and electrons from reduced cytochrome b5 to introduce the first double bond into saturated fatty acyl-CoA substrates. Catalyzes the insertion of a cis double bond at the delta-9 position into fatty acyl-CoA substrates including palmitoyl-CoA and stearoyl-CoA. Required for the biosynthesis of membrane phospholipids, cholesterol esters and triglycerides. Regulates fatty acid desaturation, that is, the ratio of unsaturated versus saturated fatty acyl chains, by competing with the acyltransferase STC1 for the common substrate C16:0-CoA. SCT1 sequesters C16:0-CoA into lipids, thereby shielding it from desaturation by OLE1. In Saccharomyces cerevisiae (strain ATCC 204508 / S288c) (Baker's yeast), this protein is Acyl-CoA desaturase 1 (OLE1).